The sequence spans 259 residues: Adenosylcobinamide-GDP ribazoletransferase (259 aa).

Transmembrane regions (helical) follow at residues 37–57 (ASRY…LVYS), 58–78 (VMLH…ASVL), 118–138 (ALAL…LALF), 143–163 (VSLA…SFIF), 195–215 (AAIS…LGLL), and 237–257 (LGAT…IVGA).

It belongs to the CobS family. The cofactor is Mg(2+).

It is found in the cell inner membrane. The catalysed reaction is alpha-ribazole + adenosylcob(III)inamide-GDP = adenosylcob(III)alamin + GMP + H(+). The enzyme catalyses alpha-ribazole 5'-phosphate + adenosylcob(III)inamide-GDP = adenosylcob(III)alamin 5'-phosphate + GMP + H(+). It functions in the pathway cofactor biosynthesis; adenosylcobalamin biosynthesis; adenosylcobalamin from cob(II)yrinate a,c-diamide: step 7/7. Its function is as follows. Joins adenosylcobinamide-GDP and alpha-ribazole to generate adenosylcobalamin (Ado-cobalamin). Also synthesizes adenosylcobalamin 5'-phosphate from adenosylcobinamide-GDP and alpha-ribazole 5'-phosphate. This chain is Adenosylcobinamide-GDP ribazoletransferase, found in Shewanella piezotolerans (strain WP3 / JCM 13877).